Here is a 569-residue protein sequence, read N- to C-terminus: Protein angel homolog 2 (569 aa).

Disordered stretches follow at residues 1 to 22, 63 to 92, and 109 to 155; these read MRKGRHMPRHTNANYARPGVSP, LQHPSSSFSTVRHPFNRPPRPPDPYQWSSW, and GLME…WLRN. Polar residues predominate over residues 63–72; it reads LQHPSSSFST. Over residues 139–150 the composition is skewed to low complexity; the sequence is PPKGSRSPKGSP.

It belongs to the CCR4/nocturin family.

This is Protein angel homolog 2 (angel2) from Danio rerio (Zebrafish).